Reading from the N-terminus, the 57-residue chain is Amyloid-beta precursor protein (57 aa).

Residues 1–33 are Extracellular-facing; it reads SEVKMDAEFRHDSGYEVHHQKLVFFAEDVGSNK. Cu(2+)-binding residues include His11, Tyr15, His18, and His19. Residues His11, Tyr15, His18, and His19 each coordinate Zn(2+). The helical transmembrane segment at 34-57 threads the bilayer; that stretch reads GAIIGLMVGGVVIATVIVITLVML.

Belongs to the APP family. In terms of assembly, binds, via its C-terminus, to the PID domain of several cytoplasmic proteins, including APBB family members, the APBA family, MAPK8IP1, SHC1 and NUMB and DAB1. Binding to DAB1 inhibits its serine phosphorylation. Interacts (via NPXY motif) with DAB2 (via PID domain); the interaction is impaired by tyrosine phosphorylation of the NPXY motif. Also interacts with GPCR-like protein BPP, APPBP1, IB1, KNS2 (via its TPR domains), APPBP2 (via BaSS) and DDB1. In vitro, it binds MAPT via the MT-binding domains. Associates with microtubules in the presence of ATP and in a kinesin-dependent manner. Interacts, through a C-terminal domain, with GNAO1. Interacts with CPEB1, ANKS1B, TNFRSF21 and AGER. Interacts with ITM2B. Interacts with ITM2C. Interacts with IDE. Can form homodimers; dimerization is enhanced in the presence of Cu(2+) ions. Can form homodimers; this is promoted by heparin binding. Interacts with SORL1 (via N-terminal ectodomain); this interaction retains APP in the trans-Golgi network and reduces processing into soluble APP-alpha and amyloid-beta peptides. Interacts with PLD3. Interacts with VDAC1. Interacts with NSG1; could regulate APP processing. Amyloid-beta protein 42 interacts with FPR2. Interacts with LRRK2. Interacts (via cytoplasmic domain) with KIF5B. Interacts (via C-terminus) with APBB2/FE65L1 (via C-terminus). Interacts (via intracellular domain) with APBB3. In terms of processing, proteolytically processed under normal cellular conditions. Cleavage either by alpha-secretase, beta-secretase or theta-secretase leads to generation and extracellular release of soluble APP peptides, S-APP-alpha and S-APP-beta, and the retention of corresponding membrane-anchored C-terminal fragments, C80, C83 and C99. Subsequent processing of C80 and C83 by gamma-secretase yields P3 peptides. This is the major secretory pathway and is non-amyloidogenic. Alternatively, presenilin/nicastrin-mediated gamma-secretase processing of C99 releases the amyloid-beta proteins, amyloid-beta protein 40 and amyloid-beta protein 42, major components of amyloid plaques, and the cytotoxic C-terminal fragments, gamma-CTF(50), gamma-CTF(57) and gamma-CTF(59). PSEN1 cleavage is more efficient with C83 than with C99 as substrate (in vitro). Amyloid-beta protein 40 and Amyloid-beta protein 42 are cleaved by ACE. Many other minor amyloid-beta peptides, amyloid-beta 1-X peptides, are found in cerebral spinal fluid (CSF) including the amyloid-beta X-15 peptides, produced from the cleavage by alpha-secretase.

The protein localises to the cell membrane. Its subcellular location is the membrane. It localises to the perikaryon. The protein resides in the cell projection. It is found in the growth cone. The protein localises to the clathrin-coated pit. Its subcellular location is the early endosome. It localises to the cytoplasmic vesicle. The protein resides in the secreted. It is found in the cell surface. The protein localises to the nucleus. Its subcellular location is the cytoplasm. Functionally, functions as a cell surface receptor and performs physiological functions on the surface of neurons relevant to neurite growth, neuronal adhesion and axonogenesis. Interaction between APP molecules on neighboring cells promotes synaptogenesis. Involved in cell mobility and transcription regulation through protein-protein interactions. Can promote transcription activation through binding to APBB1-KAT5 and inhibit Notch signaling through interaction with Numb. Couples to apoptosis-inducing pathways such as those mediated by G(o) and JIP. Inhibits G(o)-alpha ATPase activity. Acts as a kinesin I membrane receptor, mediating the axonal transport of beta-secretase and presenilin 1. By acting as a kinesin I membrane receptor, plays a role in axonal anterograde transport of cargo towards synapses in axons. May be involved in copper homeostasis/oxidative stress through copper ion reduction. In vitro, copper-metallated APP induces neuronal death directly or is potentiated through Cu(2+)-mediated low-density lipoprotein oxidation. Can regulate neurite outgrowth through binding to components of the extracellular matrix such as heparin and collagen I and IV. Induces a AGER-dependent pathway that involves activation of p38 MAPK, resulting in internalization of amyloid-beta peptide and mitochondrial dysfunction in cultured cortical neurons. Provides Cu(2+) ions for GPC1 which are required for release of nitric oxide (NO) and subsequent degradation of the heparan sulfate chains on GPC1. This chain is Amyloid-beta precursor protein (APP), found in Ursus maritimus (Polar bear).